A 100-amino-acid polypeptide reads, in one-letter code: NADH-quinone oxidoreductase subunit K (100 aa).

Helical transmembrane passes span L4 to I24, L28 to V48, and V60 to L80.

The protein belongs to the complex I subunit 4L family. NDH-1 is composed of 13 different subunits. Subunits NuoA, H, J, K, L, M, N constitute the membrane sector of the complex.

The protein resides in the cell inner membrane. The catalysed reaction is a quinone + NADH + 5 H(+)(in) = a quinol + NAD(+) + 4 H(+)(out). Its function is as follows. NDH-1 shuttles electrons from NADH, via FMN and iron-sulfur (Fe-S) centers, to quinones in the respiratory chain. The immediate electron acceptor for the enzyme in this species is believed to be ubiquinone. Couples the redox reaction to proton translocation (for every two electrons transferred, four hydrogen ions are translocated across the cytoplasmic membrane), and thus conserves the redox energy in a proton gradient. The chain is NADH-quinone oxidoreductase subunit K from Shigella sonnei (strain Ss046).